The following is a 156-amino-acid chain: ATP synthase subunit b (156 aa).

A helical membrane pass occupies residues L7–P27.

This sequence belongs to the ATPase B chain family. In terms of assembly, F-type ATPases have 2 components, F(1) - the catalytic core - and F(0) - the membrane proton channel. F(1) has five subunits: alpha(3), beta(3), gamma(1), delta(1), epsilon(1). F(0) has three main subunits: a(1), b(2) and c(10-14). The alpha and beta chains form an alternating ring which encloses part of the gamma chain. F(1) is attached to F(0) by a central stalk formed by the gamma and epsilon chains, while a peripheral stalk is formed by the delta and b chains.

The protein localises to the cell inner membrane. F(1)F(0) ATP synthase produces ATP from ADP in the presence of a proton or sodium gradient. F-type ATPases consist of two structural domains, F(1) containing the extramembraneous catalytic core and F(0) containing the membrane proton channel, linked together by a central stalk and a peripheral stalk. During catalysis, ATP synthesis in the catalytic domain of F(1) is coupled via a rotary mechanism of the central stalk subunits to proton translocation. Functionally, component of the F(0) channel, it forms part of the peripheral stalk, linking F(1) to F(0). This is ATP synthase subunit b from Alcanivorax borkumensis (strain ATCC 700651 / DSM 11573 / NCIMB 13689 / SK2).